Here is a 176-residue protein sequence, read N- to C-terminus: ATP-dependent protease subunit HslV (176 aa).

Residue Thr2 is part of the active site. 3 residues coordinate Na(+): Gly157, Cys160, and Thr163.

The protein belongs to the peptidase T1B family. HslV subfamily. As to quaternary structure, a double ring-shaped homohexamer of HslV is capped on each side by a ring-shaped HslU homohexamer. The assembly of the HslU/HslV complex is dependent on binding of ATP.

It is found in the cytoplasm. It catalyses the reaction ATP-dependent cleavage of peptide bonds with broad specificity.. With respect to regulation, allosterically activated by HslU binding. Protease subunit of a proteasome-like degradation complex believed to be a general protein degrading machinery. The chain is ATP-dependent protease subunit HslV from Pseudomonas entomophila (strain L48).